We begin with the raw amino-acid sequence, 88 residues long: Small ribosomal subunit protein uS17c (88 aa).

It belongs to the universal ribosomal protein uS17 family. Part of the 30S ribosomal subunit.

Its subcellular location is the plastid. The protein resides in the cyanelle. One of the primary rRNA binding proteins, it binds specifically to the 5'-end of 16S ribosomal RNA. The sequence is that of Small ribosomal subunit protein uS17c (rps17) from Cyanophora paradoxa.